Reading from the N-terminus, the 1453-residue chain is MFSFVDSRLLLLIAATVLLTRGEGEEDIQTGSCVQDGLTYNDKDVWKPEPCQICVCDSGNILCDEVICEDTSDCPNAEIPFGECCPICPDVDASPVYPESAGVEGPKGDTGPRGDRGLPGPPGRDGIPGQPGLPGPPGPPGPPGLGGNFAPQMSYGYDEKSAGVAVPGPMGPAGPRGLPGPPGAPGPQGFQGPPGEPGEPGASGPMGPRGPAGPPGKNGDDGEAGKPGRPGQRGPPGPQGARGLPGTAGLPGMKGHRGFSGLDGAKGQPGPAGPKGEPGSPGENGAPGQMGPRGLPGERGRPGPSGPAGARGNDGAPGAAGPPGPTGPAGPPGFPGAAGAKGETGPQGARGSEGPQGSRGEPGPPGPAGAAGPAGNPGADGQPGAKGATGAPGIAGAPGFPGARGPSGPQGPSGAPGPKGNSGEPGAPGNKGDTGAKGEPGPAGVQGPPGPAGEEGKRGARGEPGPAGLPGPAGERGAPGSRGFPGADGIAGPKGPPGERGSPGAVGPKGSPGEAGRPGEAGLPGAKGLTGSPGSPGPDGKTGPPGPAGQDGRPGPAGPPGARGQAGVMGFPGPKGAAGEPGKPGERGAPGPPGAVGAAGKDGEAGAQGPPGPTGPAGERGEQGPAGAPGFQGLPGPAGPPGEAGKPGEQGVPGNAGAPGPAGARGERGFPGERGVQGPPGPQGPRGANGAPGNDGAKGDAGAPGAPGNEGPPGLEGMPGERGAAGLPGAKGDRGDPGPKGADGAPGKDGLRGLTGPIGPPGPAGAPGDKGEAGPPGPAGPTGARGAPGDRGEPGPPGPAGFAGPPGADGQPGAKGETGDAGAKGDAGPPGPAGPTGAPGPAGZVGAPGPKGARGSAGPPGATGFPGAAGRVGPPGPSGNIGLPGPPGPAGKZGSKGPRGETGPAGRPGEPGPAGPPGPPGEKGSPGADGPIGAPGTPGPQGIAGQRGVVGLPGQRGERGFPGLPGPSGEPGKQGPSGASGERGPPGPMGPPGLAGPPGEAGREGAPGAEGAPGRDGAAGPKGDRGETGPAGPPGAPGAPGAPGPVGPAGKNGDRGETGPAGPAGPPGPAGARGPAGPQGPRGDKGETGEQGDRGMKGHRGFSGLQGPPGPPGAPGEQGPSGASGPAGPRGPPGSAGAAGKDGLNGLPGPIGPPGPRGRTGEVGPVGPPGPPGPPGPPGPPSGGFDLSFLPQPPQEKAHDGGRYYRADDANVMRDRDLEVDTTLKSLSQQIENIRSPEGTRKNPARTCRDLKMCHGDWKSGEYWIDPNQGCNLDAIKVYCNMETGETCVYPTQATIAQKNWYLSKNPKEKKHVWFGETMSDGFQFEYGGEGSNPADVAIQLTFLRLMSTEATQNVTYHCKNSVAYMDHDTGNLKKALLLQGANEIEIRAEGNSRFTYGVTEDGCTSHTGAWGKTVIEYKTTKTSRLPIIDLAPMDVGAPDQEFGIDIGPVCFL.

The first 22 residues, 1 to 22 (MFSFVDSRLLLLIAATVLLTRG), serve as a signal peptide directing secretion. Positions 23–151 (EGEEDIQTGS…PPGLGGNFAP (129 aa)) are cleaved as a propeptide — N-terminal propeptide. Residues 31-89 (GSCVQDGLTYNDKDVWKPEPCQICVCDSGNILCDEVICEDTSDCPNAEIPFGECCPICP) form the VWFC domain. A disordered region spans residues 98–1203 (PESAGVEGPK…PQEKAHDGGR (1106 aa)). The span at 106 to 116 (PKGDTGPRGDR) shows a compositional bias: basic and acidic residues. Pro residues predominate over residues 131–143 (PGLPGPPGPPGPP). A Pyrrolidone carboxylic acid modification is found at Gln152. Lys160 bears the Allysine mark. Positions 162 to 176 (AGVAVPGPMGPAGPR) are enriched in low complexity. Residues Pro179, Pro182, Pro185, Pro194, Pro197, Pro200, Pro215, Pro230, Pro236, Pro245, and Pro251 each carry the 4-hydroxyproline modification. A compositionally biased stretch (low complexity) spans 187-206 (PQGFQGPPGEPGEPGASGPM). A 5-hydroxylysine; alternate modification is found at Lys254. An O-linked (Gal...) hydroxylysine; partial glycan is attached at Lys254. Residues 265–284 (AKGQPGPAGPKGEPGSPGEN) are compositionally biased toward low complexity. 10 positions are modified to 4-hydroxyproline: Pro269, Pro278, Pro281, Pro287, Pro296, Pro302, Pro317, Pro323, Pro332, and Pro335. Low complexity predominate over residues 307 to 319 (PAGARGNDGAPGA). Over residues 320–334 (AGPPGPTGPAGPPGF) the composition is skewed to pro residues. Over residues 350 to 361 (RGSEGPQGSRGE) the composition is skewed to low complexity. A 4-hydroxyproline mark is found at Pro362, Pro365, Pro377, Pro383, Pro392, Pro398, Pro401, and Pro416. A compositionally biased stretch (low complexity) spans 368 to 418 (AGAAGPAGNPGADGQPGAKGATGAPGIAGAPGFPGARGPSGPQGPSGAPGP). Lys419 carries the post-translational modification 5-hydroxylysine. 8 positions are modified to 4-hydroxyproline: Pro425, Pro428, Pro440, Pro449, Pro464, Pro470, Pro479, and Pro485. The segment covering 463 to 482 (EPGPAGLPGPAGERGAPGSR) has biased composition (low complexity). Lys494 is subject to 5-hydroxylysine. Pro497, Pro503, Pro512, Pro518, Pro524, Pro533, Pro536, Pro545, Pro554, Pro560, Pro572, Pro581, Pro584, Pro590, Pro593, Pro611, Pro629, Pro635, Pro641, Pro647, Pro653, Pro659, Pro671, Pro680, Pro692, Pro704, Pro707, Pro713, Pro719, Pro728, and Pro737 each carry 4-hydroxyproline. Over residues 527 to 581 (KGLTGSPGSPGPDGKTGPPGPAGQDGRPGPAGPPGARGQAGVMGFPGPKGAAGEP) the composition is skewed to low complexity. Positions 623 to 664 (QGPAGAPGFQGLPGPAGPPGEAGKPGEQGVPGNAGAPGPAGA) are enriched in low complexity. The segment covering 685–722 (PRGANGAPGNDGAKGDAGAPGAPGNEGPPGLEGMPGER) has biased composition (low complexity). At Lys740 the chain carries 5-hydroxylysine. 4-hydroxyproline occurs at positions 746, 761, 767, 776, 788, 794, 797, 806, 812, 830, 839, and 848. Residues 800 to 827 (AGFAGPPGADGQPGAKGETGDAGAKGDA) show a composition bias toward low complexity. Low complexity predominate over residues 835 to 883 (PTGAPGPAGZVGAPGPKGARGSAGPPGATGFPGAAGRVGPPGPSGNIGL). Lys851 bears the 5-hydroxylysine mark. Pro860 and Pro866 each carry 4-hydroxyproline. Position 874 is a 3-hydroxyproline (Pro874). Pro875, Pro884, Pro887, Pro908, Pro911, Pro917, Pro920, Pro926, Pro935, Pro953, Pro962, Pro965, Pro971, Pro986, Pro992, Pro998, Pro1007, and Pro1013 each carry 4-hydroxyproline. Residues 890-908 (AGKZGSKGPRGETGPAGRP) show a composition bias toward low complexity. The span at 910–920 (EPGPAGPPGPP) shows a compositional bias: pro residues. Residues 985–995 (PPGPMGPPGLA) are compositionally biased toward pro residues. Low complexity predominate over residues 997-1021 (PPGEAGREGAPGAEGAPGRDGAAGP). Residue Lys1022 is modified to 5-hydroxylysine; partial. Over residues 1031–1046 (AGPPGAPGAPGAPGPV) the composition is skewed to pro residues. Residues Pro1034, Pro1037, Pro1040, and Pro1067 each carry the 4-hydroxyproline modification. The span at 1070-1081 (AGARGPAGPQGP) shows a compositional bias: low complexity. A compositionally biased stretch (basic and acidic residues) spans 1082–1096 (RGDKGETGEQGDRGM). Lys1085 carries the 5-hydroxylysine; partial modification. The residue at position 1097 (Lys1097) is a 5-hydroxylysine; alternate. Residue Lys1097 is glycosylated (O-linked (Gal...) hydroxylysine; partial). 4-hydroxyproline occurs at positions 1109, 1112, 1115, 1133, and 1148. The span at 1115 to 1139 (PGEQGPSGASGPAGPRGPPGSAGAA) shows a compositional bias: low complexity. Pro1153 carries the 3-hydroxyproline modification. Pro1154 bears the 4-hydroxyproline mark. Positions 1166–1181 (VGPPGPPGPPGPPGPP) are enriched in pro residues. Position 1168 is a 3-hydroxyproline (Pro1168). Position 1169 is a 4-hydroxyproline (Pro1169). Pro1171 is modified (3-hydroxyproline). 4-hydroxyproline is present on Pro1172. Position 1174 is a 3-hydroxyproline (Pro1174). Pro1175, Pro1178, and Pro1181 each carry 4-hydroxyproline. Allysine is present on Lys1197. A propeptide spans 1208 to 1453 (DDANVMRDRD…GIDIGPVCFL (246 aa)) (C-terminal propeptide). The region spanning 1218-1453 (LEVDTTLKSL…GIDIGPVCFL (236 aa)) is the Fibrillar collagen NC1 domain. Intrachain disulfides connect Cys1248/Cys1280, Cys1288/Cys1451, and Cys1359/Cys1404. Positions 1266, 1268, 1269, 1271, and 1274 each coordinate Ca(2+). A glycan (N-linked (GlcNAc...) asparagine) is linked at Asn1354.

Belongs to the fibrillar collagen family. Trimers of one alpha 2(I) and two alpha 1(I) chains. In terms of processing, contains mostly 4-hydroxyproline. Proline residues at the third position of the tripeptide repeating unit (G-X-Y) are 4-hydroxylated in some or all of the chains. Contains 3-hydroxyproline. This modification occurs on the first proline residue in the sequence motif Gly-Pro-Hyp, where Hyp is 4-hydroxyproline. Post-translationally, lysine residues at the third position of the tripeptide repeating unit (G-X-Y) are 5-hydroxylated in some or all of the chains. In terms of processing, O-glycosylated on hydroxylated lysine residues. The O-linked glycan consists of a Glc-Gal disaccharide. As to expression, forms the fibrils of tendon, ligaments and bones. In bones the fibrils are mineralized with calcium hydroxyapatite.

It is found in the secreted. It localises to the extracellular space. Its subcellular location is the extracellular matrix. Type I collagen is a member of group I collagen (fibrillar forming collagen). The chain is Collagen alpha-1(I) chain (COL1A1) from Gallus gallus (Chicken).